Here is a 570-residue protein sequence, read N- to C-terminus: Urease subunit alpha 1 (570 aa).

The Urease domain occupies 131 to 570 (GGIDTHVHFI…VPMAQRYFLF (440 aa)). The Ni(2+) site is built by histidine 136, histidine 138, and lysine 219. Lysine 219 is modified (N6-carboxylysine). A substrate-binding site is contributed by histidine 221. Ni(2+) contacts are provided by histidine 248 and histidine 274. Histidine 322 serves as the catalytic Proton donor. Position 362 (aspartate 362) interacts with Ni(2+).

Belongs to the metallo-dependent hydrolases superfamily. Urease alpha subunit family. Heterotrimer of UreA (gamma), UreB (beta) and UreC (alpha) subunits. Three heterotrimers associate to form the active enzyme. Ni cation is required as a cofactor. Carboxylation allows a single lysine to coordinate two nickel ions.

It localises to the cytoplasm. It carries out the reaction urea + 2 H2O + H(+) = hydrogencarbonate + 2 NH4(+). It participates in nitrogen metabolism; urea degradation; CO(2) and NH(3) from urea (urease route): step 1/1. In terms of biological role, may protect brucellae during their passage through the stomach. The major route of infection in human brucellosis is oral. This is Urease subunit alpha 1 from Brucella abortus (strain 2308).